The primary structure comprises 329 residues: Ribosomal protein L11 methyltransferase (329 aa).

4 residues coordinate S-adenosyl-L-methionine: T177, G198, D220, and N264.

Belongs to the methyltransferase superfamily. PrmA family.

The protein resides in the cytoplasm. It carries out the reaction L-lysyl-[protein] + 3 S-adenosyl-L-methionine = N(6),N(6),N(6)-trimethyl-L-lysyl-[protein] + 3 S-adenosyl-L-homocysteine + 3 H(+). Functionally, methylates ribosomal protein L11. In Helicobacter pylori (strain J99 / ATCC 700824) (Campylobacter pylori J99), this protein is Ribosomal protein L11 methyltransferase.